The primary structure comprises 260 residues: Methanethiol S-methyltransferase (260 aa).

Transmembrane regions (helical) follow at residues 27–47 (CYLF…GIGV), 55–75 (PGIT…LFAA), 107–127 (CLVL…VWNV), 134–154 (GLLI…TFLI), and 196–216 (FLIA…FAIL).

This sequence belongs to the nurim family.

The protein resides in the membrane. The enzyme catalyses methanethiol + S-adenosyl-L-methionine = dimethyl sulfide + S-adenosyl-L-homocysteine + H(+). Its function is as follows. Catalyzes the methylation of methanethiol (MeSH) to yield dimethylsulphide (DMS). This chain is Methanethiol S-methyltransferase, found in Pseudomonas sp. (strain GM41(2012)).